The chain runs to 88 residues: Large ribosomal subunit protein eL34 (88 aa).

This sequence belongs to the eukaryotic ribosomal protein eL34 family.

The chain is Large ribosomal subunit protein eL34 from Saccharolobus solfataricus (strain ATCC 35092 / DSM 1617 / JCM 11322 / P2) (Sulfolobus solfataricus).